Reading from the N-terminus, the 485-residue chain is ATP synthase subunit beta (485 aa).

Residue glycine 170–threonine 177 coordinates ATP.

It belongs to the ATPase alpha/beta chains family. F-type ATPases have 2 components, CF(1) - the catalytic core - and CF(0) - the membrane proton channel. CF(1) has five subunits: alpha(3), beta(3), gamma(1), delta(1), epsilon(1). CF(0) has three main subunits: a(1), b(2) and c(9-12). The alpha and beta chains form an alternating ring which encloses part of the gamma chain. CF(1) is attached to CF(0) by a central stalk formed by the gamma and epsilon chains, while a peripheral stalk is formed by the delta and b chains.

Its subcellular location is the cell membrane. The enzyme catalyses ATP + H2O + 4 H(+)(in) = ADP + phosphate + 5 H(+)(out). Produces ATP from ADP in the presence of a proton gradient across the membrane. The catalytic sites are hosted primarily by the beta subunits. The protein is ATP synthase subunit beta of Salinispora arenicola (strain CNS-205).